The following is a 292-amino-acid chain: Acetyl-coenzyme A carboxylase carboxyl transferase subunit beta (292 aa).

A CoA carboxyltransferase N-terminal domain is found at 23–292 (VWSKCTACGN…TEATEVSVNE (270 aa)). Residues Cys-27, Cys-30, Cys-46, and Cys-49 each coordinate Zn(2+). Residues 27-49 (CTACGNIIYKADLERSLNVCPKC) form a C4-type zinc finger.

The protein belongs to the AccD/PCCB family. In terms of assembly, acetyl-CoA carboxylase is a heterohexamer composed of biotin carboxyl carrier protein (AccB), biotin carboxylase (AccC) and two subunits each of ACCase subunit alpha (AccA) and ACCase subunit beta (AccD). The cofactor is Zn(2+).

It is found in the cytoplasm. The enzyme catalyses N(6)-carboxybiotinyl-L-lysyl-[protein] + acetyl-CoA = N(6)-biotinyl-L-lysyl-[protein] + malonyl-CoA. Its pathway is lipid metabolism; malonyl-CoA biosynthesis; malonyl-CoA from acetyl-CoA: step 1/1. Component of the acetyl coenzyme A carboxylase (ACC) complex. Biotin carboxylase (BC) catalyzes the carboxylation of biotin on its carrier protein (BCCP) and then the CO(2) group is transferred by the transcarboxylase to acetyl-CoA to form malonyl-CoA. The sequence is that of Acetyl-coenzyme A carboxylase carboxyl transferase subunit beta from Idiomarina loihiensis (strain ATCC BAA-735 / DSM 15497 / L2-TR).